We begin with the raw amino-acid sequence, 337 residues long: WRKY transcription factor 23 (337 aa).

Positions 100-160 are disordered; sequence INPPATPNSS…KNNQKRQREA (61 aa). A compositionally biased stretch (low complexity) spans 106–118; it reads PNSSSISSASSEA. The segment covering 142–155 has biased composition (basic residues); sequence HTKKQLKAKKNNQK. A DNA-binding region (WRKY) is located at residues 168–233; it reads SEVDHLEDGY…YEGQHTHISP (66 aa).

It belongs to the WRKY group II-c family.

Its subcellular location is the nucleus. In terms of biological role, transcription factor. Interacts specifically with the W box (5'-(T)TGAC[CT]-3'), a frequently occurring elicitor-responsive cis-acting element. The polypeptide is WRKY transcription factor 23 (WRKY23) (Arabidopsis thaliana (Mouse-ear cress)).